The following is a 129-amino-acid chain: MADAAVGKEKCGDQRLVSLPLSRIRVIMKSSPEVSSINQEALVLTAKATELFVQYLATCSYRHGSGKAKKALTYSDLASTAEDSETLQFLADILPKKILASKYLKMLKEKREEEEDNEDDGSDLGEALA.

Ala-2 carries the N-acetylalanine modification. Lys-102 carries the post-translational modification N6-acetyllysine. The stretch at Leu-104–Asp-120 forms a coiled coil. The tract at residues Glu-109–Ala-129 is disordered. Residues Glu-112–Asp-123 are compositionally biased toward acidic residues. A Phosphoserine modification is found at Ser-122.

As to quaternary structure, heterodimer with POLE3; binds to DNA. Component of the CHRAC ISWI chromatin remodeling complex at least composed of SMARCA5/SNF2H, BAZ1A/ACF1, CHRAC1 and POLE3; the complex preferentially binds DNA through the CHRAC1-POLE3 heterodimer and possesses ATP-dependent nucleosome-remodeling activity. Within the complex, the heterodimer with POLE3 interacts with SMARCA5/SNF2H; the interaction is direct and enhances nucleosome sliding activity by the SMARCA5/SNF2H and BAZ1A/ACF1 interaction. Within the complex, the heterodimer with POLE3 interacts with BAZ1A/ACF1; the interactions are direct. Ubiquitously expressed.

Its subcellular location is the nucleus. Its function is as follows. Forms a complex with DNA polymerase epsilon subunit POLE3 and binds naked DNA, which is then incorporated into chromatin, aided by the nucleosome remodeling activity of ISWI/SNF2H and ACF1. Does not enhance nucleosome sliding activity of the ACF-5 ISWI chromatin remodeling complex. In Mus musculus (Mouse), this protein is Chromatin accessibility complex protein 1 (Chrac1).